The sequence spans 234 residues: Probable transcriptional regulatory protein Psyr_3028 (234 aa).

It belongs to the TACO1 family.

The protein resides in the cytoplasm. The protein is Probable transcriptional regulatory protein Psyr_3028 of Pseudomonas syringae pv. syringae (strain B728a).